The sequence spans 394 residues: Elongation factor Tu (394 aa).

The tr-type G domain maps to 10–205 (KPHVNIGTIG…VDTWIPLPPR (196 aa)). The G1 stretch occupies residues 19-26 (GHVDHGKT). 19 to 26 (GHVDHGKT) serves as a coordination point for GTP. Thr-26 is a Mg(2+) binding site. The interval 60–64 (GITIN) is G2. Residues 81 to 84 (DCPG) are G3. Residues 81-85 (DCPGH) and 136-139 (NKCD) contribute to the GTP site. The interval 136–139 (NKCD) is G4. Residues 174–176 (SAL) form a G5 region.

Belongs to the TRAFAC class translation factor GTPase superfamily. Classic translation factor GTPase family. EF-Tu/EF-1A subfamily. In terms of assembly, monomer.

The protein localises to the cytoplasm. It carries out the reaction GTP + H2O = GDP + phosphate + H(+). Its function is as follows. GTP hydrolase that promotes the GTP-dependent binding of aminoacyl-tRNA to the A-site of ribosomes during protein biosynthesis. This Bacteroides fragilis (strain ATCC 25285 / DSM 2151 / CCUG 4856 / JCM 11019 / LMG 10263 / NCTC 9343 / Onslow / VPI 2553 / EN-2) protein is Elongation factor Tu.